The primary structure comprises 122 residues: Small ribosomal subunit protein uS12c (122 aa).

Belongs to the universal ribosomal protein uS12 family. Part of the 30S ribosomal subunit.

It is found in the plastid. It localises to the chloroplast. In terms of biological role, with S4 and S5 plays an important role in translational accuracy. Located at the interface of the 30S and 50S subunits. This chain is Small ribosomal subunit protein uS12c (rps12), found in Mesostigma viride (Green alga).